The chain runs to 353 residues: Photosystem II protein D1 (353 aa).

T2 is subject to N-acetylthreonine. Phosphothreonine is present on T2. 3 consecutive transmembrane segments (helical) span residues Y29 to S46, H118 to L133, and W142 to A156. H118 provides a ligand contact to chlorophyll a. Y126 is a pheophytin a binding site. The [CaMn4O5] cluster site is built by D170 and E189. A helical membrane pass occupies residues F197–L218. Chlorophyll a is bound at residue H198. A quinone-binding positions include H215 and S264–F265. H215 is a binding site for Fe cation. H272 serves as a coordination point for Fe cation. A helical transmembrane segment spans residues F274–M288. H332, E333, D342, and A344 together coordinate [CaMn4O5] cluster. A propeptide spanning residues S345–G353 is cleaved from the precursor.

Belongs to the reaction center PufL/M/PsbA/D family. In terms of assembly, PSII is composed of 1 copy each of membrane proteins PsbA, PsbB, PsbC, PsbD, PsbE, PsbF, PsbH, PsbI, PsbJ, PsbK, PsbL, PsbM, PsbT, PsbX, PsbY, PsbZ, Psb30/Ycf12, at least 3 peripheral proteins of the oxygen-evolving complex and a large number of cofactors. It forms dimeric complexes. The D1/D2 heterodimer binds P680, chlorophylls that are the primary electron donor of PSII, and subsequent electron acceptors. It shares a non-heme iron and each subunit binds pheophytin, quinone, additional chlorophylls, carotenoids and lipids. D1 provides most of the ligands for the Mn4-Ca-O5 cluster of the oxygen-evolving complex (OEC). There is also a Cl(-1) ion associated with D1 and D2, which is required for oxygen evolution. The PSII complex binds additional chlorophylls, carotenoids and specific lipids. serves as cofactor. Post-translationally, tyr-161 forms a radical intermediate that is referred to as redox-active TyrZ, YZ or Y-Z. C-terminally processed by CTPA; processing is essential to allow assembly of the oxygen-evolving complex and thus photosynthetic growth.

Its subcellular location is the plastid. The protein resides in the chloroplast thylakoid membrane. It carries out the reaction 2 a plastoquinone + 4 hnu + 2 H2O = 2 a plastoquinol + O2. In terms of biological role, photosystem II (PSII) is a light-driven water:plastoquinone oxidoreductase that uses light energy to abstract electrons from H(2)O, generating O(2) and a proton gradient subsequently used for ATP formation. It consists of a core antenna complex that captures photons, and an electron transfer chain that converts photonic excitation into a charge separation. The D1/D2 (PsbA/PsbD) reaction center heterodimer binds P680, the primary electron donor of PSII as well as several subsequent electron acceptors. This is Photosystem II protein D1 from Mesostigma viride (Green alga).